We begin with the raw amino-acid sequence, 147 residues long: Ribonuclease H (147 aa).

The RNase H type-1 domain occupies 1 to 142; it reads MTEIVEIFTD…ADALARSAIT (142 aa). Mg(2+) is bound by residues D10, E48, D70, and D134.

It belongs to the RNase H family. As to quaternary structure, monomer. Requires Mg(2+) as cofactor.

It localises to the cytoplasm. It carries out the reaction Endonucleolytic cleavage to 5'-phosphomonoester.. Its function is as follows. Endonuclease that specifically degrades the RNA of RNA-DNA hybrids. This Nitrosococcus oceani (strain ATCC 19707 / BCRC 17464 / JCM 30415 / NCIMB 11848 / C-107) protein is Ribonuclease H.